Consider the following 264-residue polypeptide: Diphthine synthase (264 aa).

S-adenosyl-L-methionine-binding positions include L10, D87, V90, 115–116, L166, A209, and H234; that span reads SI.

It belongs to the diphthine synthase family. In terms of assembly, homodimer.

It carries out the reaction 2-[(3S)-amino-3-carboxypropyl]-L-histidyl-[translation elongation factor 2] + 3 S-adenosyl-L-methionine = diphthine-[translation elongation factor 2] + 3 S-adenosyl-L-homocysteine + 3 H(+). Its pathway is protein modification; peptidyl-diphthamide biosynthesis. S-adenosyl-L-methionine-dependent methyltransferase that catalyzes the trimethylation of the amino group of the modified target histidine residue in translation elongation factor 2 (EF-2), to form an intermediate called diphthine. The three successive methylation reactions represent the second step of diphthamide biosynthesis. This Thermococcus onnurineus (strain NA1) protein is Diphthine synthase.